A 302-amino-acid polypeptide reads, in one-letter code: Glutaminase (302 aa).

Substrate-binding residues include serine 61, asparagine 111, glutamate 155, asparagine 162, tyrosine 186, tyrosine 238, and valine 256.

This sequence belongs to the glutaminase family. Homotetramer.

It carries out the reaction L-glutamine + H2O = L-glutamate + NH4(+). The protein is Glutaminase of Pseudomonas fluorescens (strain SBW25).